The following is a 230-amino-acid chain: N-(5'-phosphoribosyl)anthranilate isomerase (230 aa).

The protein belongs to the TrpF family.

The catalysed reaction is N-(5-phospho-beta-D-ribosyl)anthranilate = 1-(2-carboxyphenylamino)-1-deoxy-D-ribulose 5-phosphate. It functions in the pathway amino-acid biosynthesis; L-tryptophan biosynthesis; L-tryptophan from chorismate: step 3/5. The sequence is that of N-(5'-phosphoribosyl)anthranilate isomerase from Thermosynechococcus vestitus (strain NIES-2133 / IAM M-273 / BP-1).